A 2376-amino-acid polypeptide reads, in one-letter code: MAG2-interacting protein 2 (2376 aa).

As to quaternary structure, forms a complex with MAG2, ZW10/MIP1 and MIP3 on the endoplasmic reticulum.

The protein resides in the endoplasmic reticulum membrane. In terms of biological role, required for proper maturation of seed storage proteins. Forms a complex with MAG2, ZW10/MIP1 and MIP3 on the endoplasmic reticulum that may be responsible for efficient transport of seed storage proteins. The chain is MAG2-interacting protein 2 from Arabidopsis thaliana (Mouse-ear cress).